Reading from the N-terminus, the 316-residue chain is Biotin synthase (316 aa).

The Radical SAM core domain occupies 42-268 (LCGESVDLCT…INPTAYIRMA (227 aa)). [4Fe-4S] cluster contacts are provided by C60, C64, and C67. Residues S104, C136, C196, and R266 each contribute to the [2Fe-2S] cluster site.

This sequence belongs to the radical SAM superfamily. Biotin synthase family. In terms of assembly, homodimer. [4Fe-4S] cluster is required as a cofactor. The cofactor is [2Fe-2S] cluster.

It carries out the reaction (4R,5S)-dethiobiotin + (sulfur carrier)-SH + 2 reduced [2Fe-2S]-[ferredoxin] + 2 S-adenosyl-L-methionine = (sulfur carrier)-H + biotin + 2 5'-deoxyadenosine + 2 L-methionine + 2 oxidized [2Fe-2S]-[ferredoxin]. The protein operates within cofactor biosynthesis; biotin biosynthesis; biotin from 7,8-diaminononanoate: step 2/2. In terms of biological role, catalyzes the conversion of dethiobiotin (DTB) to biotin by the insertion of a sulfur atom into dethiobiotin via a radical-based mechanism. The chain is Biotin synthase from Clostridium beijerinckii (strain ATCC 51743 / NCIMB 8052) (Clostridium acetobutylicum).